The primary structure comprises 37 residues: Large ribosomal subunit protein bL36B (37 aa).

Belongs to the bacterial ribosomal protein bL36 family.

The protein is Large ribosomal subunit protein bL36B of Paenarthrobacter aurescens (strain TC1).